Consider the following 87-residue polypeptide: Small ribosomal subunit protein bS20 (87 aa).

The disordered stretch occupies residues 1–22 (MANHKSALKRHKQSLKRAARNR).

It belongs to the bacterial ribosomal protein bS20 family.

Functionally, binds directly to 16S ribosomal RNA. In Nitratidesulfovibrio vulgaris (strain DP4) (Desulfovibrio vulgaris), this protein is Small ribosomal subunit protein bS20.